We begin with the raw amino-acid sequence, 249 residues long: DNA repair protein RecO (249 aa).

Belongs to the RecO family.

Involved in DNA repair and RecF pathway recombination. The sequence is that of DNA repair protein RecO from Rhodopseudomonas palustris (strain BisB5).